Here is a 101-residue protein sequence, read N- to C-terminus: Small ribosomal subunit protein bS18c (101 aa).

This sequence belongs to the bacterial ribosomal protein bS18 family. In terms of assembly, part of the 30S ribosomal subunit.

It is found in the plastid. The protein resides in the chloroplast. The sequence is that of Small ribosomal subunit protein bS18c from Gossypium hirsutum (Upland cotton).